The chain runs to 865 residues: Probable alpha/beta-glucosidase ARB_02101 (865 aa).

Residues 1 to 21 form the signal peptide; that stretch reads MFGRTLALAAVFATTVLSAAA. Asparagine 101 and asparagine 299 each carry an N-linked (GlcNAc...) asparagine glycan. Aspartate 428 acts as the Nucleophile in catalysis. Residue glutamate 431 is part of the active site. N-linked (GlcNAc...) asparagine glycosylation occurs at asparagine 515. Residue aspartate 548 is the Proton donor of the active site. N-linked (GlcNAc...) asparagine glycans are attached at residues asparagine 549, asparagine 585, and asparagine 748.

This sequence belongs to the glycosyl hydrolase 31 family.

It is found in the secreted. It catalyses the reaction Hydrolysis of terminal, non-reducing (1-&gt;4)-linked alpha-D-glucose residues with release of alpha-D-glucose.. It carries out the reaction Hydrolysis of terminal, non-reducing beta-D-glucosyl residues with release of beta-D-glucose.. Glucosidase involved in the degradation of cellulosic biomass. Has both alpha- and beta-glucosidase activity. The polypeptide is Probable alpha/beta-glucosidase ARB_02101 (Arthroderma benhamiae (strain ATCC MYA-4681 / CBS 112371) (Trichophyton mentagrophytes)).